A 576-amino-acid chain; its full sequence is MNDKQHGPFIVEGKLADSERMKQESNFLRGTISEDLTNGLTGGFEGDNFLLIRFHGMYQQDDRDIRAERAEQKLEPRHAIMLRCRLPGGVITPQQWLGIDKFAEENTLYGSIRLTNRQTFQFHGILKGKVKLAHQLLNQVGLDSLATANDVNRNVLCTSNPIQSELHQQAYEWAKKISEHLLPRTRAYAELWLDKEKVATTDEEPILGSTYLPRKFKTTVVIPPQNDVDLHANDLNFIAIAEGSKLVGFNVLVGGGLAMTHGDKNTYPSMASEFGYIPLEHTLAIAEAVVTTQRDWGNRTERKNAKTKYTLERVGVETFKAEVERRAGVKFEAIRPYEFTGRGDQIGWLKGIDDKWHLTLFIENGRLLDYPGKPLKSGVAEIAKIHKGDFRLTANQNLIIAGIPESEKQRIETIACRHGLIDDKTTVQRKNSMACVSFPTCPLAMAEAERFLPEFVTHVEQLMNKHGIGDEHIVLRVTGCPNGCARAMLAEVGLVGKALDRYNLHLGGNRIGTRIPRMYKENISSQAILSIMDELIGRWATGRQPNEGFGDFLIRTDIIKPVLDSARDFYDWQEAV.

[4Fe-4S] cluster is bound by residues cysteine 435, cysteine 441, cysteine 480, and cysteine 484. A siroheme-binding site is contributed by cysteine 484.

It belongs to the nitrite and sulfite reductase 4Fe-4S domain family. Alpha(8)-beta(8). The alpha component is a flavoprotein, the beta component is a hemoprotein. Siroheme serves as cofactor. It depends on [4Fe-4S] cluster as a cofactor.

It catalyses the reaction hydrogen sulfide + 3 NADP(+) + 3 H2O = sulfite + 3 NADPH + 4 H(+). It functions in the pathway sulfur metabolism; hydrogen sulfide biosynthesis; hydrogen sulfide from sulfite (NADPH route): step 1/1. Its function is as follows. Component of the sulfite reductase complex that catalyzes the 6-electron reduction of sulfite to sulfide. This is one of several activities required for the biosynthesis of L-cysteine from sulfate. The protein is Sulfite reductase [NADPH] hemoprotein beta-component of Photorhabdus laumondii subsp. laumondii (strain DSM 15139 / CIP 105565 / TT01) (Photorhabdus luminescens subsp. laumondii).